The following is a 257-amino-acid chain: NAD-capped RNA hydrolase NudC (257 aa).

Position 69 (Arg69) interacts with substrate. Residues Cys98 and Cys101 each coordinate Zn(2+). Glu111 lines the substrate pocket. 2 residues coordinate Zn(2+): Cys116 and Cys119. Residue Tyr124 coordinates substrate. The Nudix hydrolase domain occupies 125 to 248 (PQIAPCIIVA…TVARRLIEDT (124 aa)). Positions 158, 174, and 178 each coordinate a divalent metal cation. Residues 159 to 180 (GFVEVGETLEQAAAREIFEESR) carry the Nudix box motif. Position 192–199 (192–199 (QPWPFPHS)) interacts with substrate. Glu219 serves as a coordination point for a divalent metal cation. Ala241 is a binding site for substrate.

It belongs to the Nudix hydrolase family. NudC subfamily. Homodimer. It depends on Mg(2+) as a cofactor. Mn(2+) serves as cofactor. Zn(2+) is required as a cofactor.

It carries out the reaction a 5'-end NAD(+)-phospho-ribonucleoside in mRNA + H2O = a 5'-end phospho-adenosine-phospho-ribonucleoside in mRNA + beta-nicotinamide D-ribonucleotide + 2 H(+). The enzyme catalyses NAD(+) + H2O = beta-nicotinamide D-ribonucleotide + AMP + 2 H(+). It catalyses the reaction NADH + H2O = reduced beta-nicotinamide D-ribonucleotide + AMP + 2 H(+). In terms of biological role, mRNA decapping enzyme that specifically removes the nicotinamide adenine dinucleotide (NAD) cap from a subset of mRNAs by hydrolyzing the diphosphate linkage to produce nicotinamide mononucleotide (NMN) and 5' monophosphate mRNA. The NAD-cap is present at the 5'-end of some mRNAs and stabilizes RNA against 5'-processing. Has preference for mRNAs with a 5'-end purine. Catalyzes the hydrolysis of a broad range of dinucleotide pyrophosphates. The protein is NAD-capped RNA hydrolase NudC of Edwardsiella ictaluri (strain 93-146).